Consider the following 50-residue polypeptide: MVIKCIDKQQNLGNIILFLLLKQQYSKEDSKKFTIYKFYLQTVNYTIQLS.

This is an uncharacterized protein from Haemophilus influenzae (strain ATCC 51907 / DSM 11121 / KW20 / Rd).